The primary structure comprises 628 residues: Hepatocyte nuclear factor 1-alpha (628 aa).

Positions 1–31 are dimerization; the sequence is MVSKLSQLQTELLAALLESGLSKEALIQALG. Positions 1–32 constitute an HNF-p1 domain; it reads MVSKLSQLQTELLAALLESGLSKEALIQALGE. A disordered region spans residues 47 to 79; that stretch reads GESCGGTRGDLTELPNGLGETRGSEDDTDDDGE. Ser70 is modified (phosphoserine). Thr74 carries the post-translational modification Phosphothreonine. The 96-residue stretch at 87–182 folds into the POU-specific atypical domain; the sequence is KELENLSPEE…VAQQFTHAGQ (96 aa). Ser93 carries the phosphoserine modification. A Glycyl lysine isopeptide (Lys-Gly) (interchain with G-Cter in ubiquitin) cross-link involves residue Lys117. Interaction with DNA stretches follow at residues 130-132, 143-149, 155-158, and 203-206; these read QRE, HLSQHLN, KTQK, and RFKW. The tract at residues 183–205 is disordered; the sequence is GGLIEEPTGDELPTKKGRRNRFK. A Nuclear localization signal motif is present at residues 197–205; the sequence is KKGRRNRFK. The homeobox; HNF1-type DNA-binding region spans 199–279; the sequence is GRRNRFKWGP…NRRKEEAFRH (81 aa). Ser247 carries the phosphoserine modification. Interaction with DNA stretches follow at residues 263–265 and 270–273; these read RVY and NRRK. Disordered regions lie at residues 284–338 and 541–585; these read DTYN…SSSG and FTSD…LSTS. Pro residues predominate over residues 288 to 298; the sequence is GPPPGPGPGPA. At Ser313 the chain carries Phosphoserine. Polar residues-rich tracts occupy residues 324–338 and 558–575; these read QSATSEAAEVPSSSG and SPATTIHIPSQDPSNIQH.

It belongs to the HNF1 homeobox family. In terms of assembly, binds DNA as a dimer. Heterotetramer with PCBD1; formed by a dimer of dimers. Interacts with PCBD1. Interacts with BHLHE41. Interacts with NR5A2. Interacts with SPOP; this interaction promotes ubiquitination and degradation of HNF1A. In terms of processing, ubiquitinated in s SPOP-dependent manner; leading to prteasomal degradation. Liver.

The protein localises to the nucleus. Transcriptional activator that regulates the tissue specific expression of multiple genes, especially in pancreatic islet cells and in liver. Binds to the inverted palindrome 5'-GTTAATNATTAAC-3'. Activates the transcription of CYP1A2, CYP2E1 and CYP3A11. The chain is Hepatocyte nuclear factor 1-alpha (Hnf1a) from Rattus norvegicus (Rat).